A 250-amino-acid polypeptide reads, in one-letter code: 5-oxoprolinase subunit A (250 aa).

The protein belongs to the LamB/PxpA family. In terms of assembly, forms a complex composed of PxpA, PxpB and PxpC.

The catalysed reaction is 5-oxo-L-proline + ATP + 2 H2O = L-glutamate + ADP + phosphate + H(+). In terms of biological role, catalyzes the cleavage of 5-oxoproline to form L-glutamate coupled to the hydrolysis of ATP to ADP and inorganic phosphate. This is 5-oxoprolinase subunit A from Paraburkholderia phymatum (strain DSM 17167 / CIP 108236 / LMG 21445 / STM815) (Burkholderia phymatum).